Reading from the N-terminus, the 352-residue chain is Inhibin beta C chain (352 aa).

The signal sequence occupies residues 1-18; it reads MASSLLLALLFLTPTTVV. A propeptide spanning residues 19–236 is cleaved from the precursor; it reads NPKTEGPCPA…VEGKHRVRRR (218 aa). N111, N143, N161, and N173 each carry an N-linked (GlcNAc...) asparagine glycan. 4 disulfides stabilise this stretch: C240-C248, C247-C317, C276-C349, and C280-C351.

This sequence belongs to the TGF-beta family. In terms of assembly, homodimeric or heterodimeric through association with alpha and beta subunits, linked by one or more disulfide bonds. Inhibins are heterodimers of one alpha and one beta subunit. Activins are homo- or heterodimers of beta subunits only. In terms of tissue distribution, mainly expressed in the adult liver.

The protein resides in the secreted. Functionally, inhibins and activins inhibit and activate, respectively, the secretion of follitropin by the pituitary gland. Inhibins/activins are involved in regulating a number of diverse functions such as hypothalamic and pituitary hormone secretion, gonadal hormone secretion, germ cell development and maturation, erythroid differentiation, insulin secretion, nerve cell survival, embryonic axial development or bone growth, depending on their subunit composition. Inhibins appear to oppose the functions of activins. This chain is Inhibin beta C chain (Inhbc), found in Mus musculus (Mouse).